The following is a 273-amino-acid chain: MRQVAIYGKGGIGKSTTTQNLTSGLHAMGKTIMVVGCDPKADSTRLLLGGLAQKSVLDTLREEGEDVELDSILKEGYGGIRCVESGGPEPGVGCAGRGIITSINMLEQLGAYTDDLDYVFYDVLGDVVCGGFAMPIREGKAQEIYIVASGEMMALYAANNISKGIQKYAKSGGVRLGGIICNSRKVANEYELLDAFAKELGSQLIHFVPRSPMVTKAEINKQTVIEFDPTCEQAEEYRELARKVDANELFVIPKPMTQERLEEILMEYGLMDL.

Residue 8–15 (GKGGIGKS) coordinates ATP. Cys-94 contributes to the [4Fe-4S] cluster binding site. Arg-97 is modified (ADP-ribosylarginine; by dinitrogenase reductase ADP-ribosyltransferase). Cys-129 is a binding site for [4Fe-4S] cluster.

The protein belongs to the NifH/BchL/ChlL family. Homodimer. Requires [4Fe-4S] cluster as cofactor. Post-translationally, the reversible ADP-ribosylation of Arg-97 inactivates the nitrogenase reductase and regulates nitrogenase activity.

It carries out the reaction N2 + 8 reduced [2Fe-2S]-[ferredoxin] + 16 ATP + 16 H2O = H2 + 8 oxidized [2Fe-2S]-[ferredoxin] + 2 NH4(+) + 16 ADP + 16 phosphate + 6 H(+). The key enzymatic reactions in nitrogen fixation are catalyzed by the nitrogenase complex, which has 2 components: the iron protein and the molybdenum-iron protein. The polypeptide is Nitrogenase iron protein 5 (nifH5) (Clostridium pasteurianum).